The primary structure comprises 142 residues: Large ribosomal subunit protein uL11 (142 aa).

Belongs to the universal ribosomal protein uL11 family. In terms of assembly, part of the ribosomal stalk of the 50S ribosomal subunit. Interacts with L10 and the large rRNA to form the base of the stalk. L10 forms an elongated spine to which L12 dimers bind in a sequential fashion forming a multimeric L10(L12)X complex. Post-translationally, one or more lysine residues are methylated.

Its function is as follows. Forms part of the ribosomal stalk which helps the ribosome interact with GTP-bound translation factors. The protein is Large ribosomal subunit protein uL11 of Sinorhizobium medicae (strain WSM419) (Ensifer medicae).